We begin with the raw amino-acid sequence, 534 residues long: CAP-Gly domain-containing linker protein 3 (534 aa).

Basic and acidic residues predominate over residues 1–16; the sequence is MTREDLPDSTPEESKL. The segment at 1 to 33 is disordered; sequence MTREDLPDSTPEESKLPMEFQSPLLEKRRRPVV. ANK repeat units lie at residues 107–148, 150–173, and 187–299; these read TDMT…LRSR, TNMN…LLKA, and NHGT…KAGT. One can recognise a CAP-Gly 1 domain in the interval 304–346; it reads GTTEFASGQWVGVELDEPDGKNDGSVGGIRYFICPPKQGIFAP. The disordered stretch occupies residues 349–391; the sequence is KISKAPDQPPSSVTSTPRTPRVDFSRVTGKGRKEKKATHKKSL. The segment covering 358 to 367 has biased composition (low complexity); that stretch reads PSSVTSTPRT. Basic residues predominate over residues 377–390; it reads GKGRKEKKATHKKS. The CAP-Gly 2 domain occupies 423 to 465; that stretch reads GKTDFAPGYWFGIELEKPTGKHDGSVFGVRYFTCSAKNGVFAP. Positions 475–534 are goLD; the sequence is PKDPQTDNNDMKKVHQVTMTQPKRNFTKVRTPKEIASENSMSRILFCCWFPWLLRAEMKS.

Homodimer.

The protein localises to the cytoplasm. Its subcellular location is the golgi apparatus. The protein resides in the golgi stack. Its function is as follows. Functions as a cytoplasmic linker protein. Involved in TGN-endosome dynamics. In Xenopus laevis (African clawed frog), this protein is CAP-Gly domain-containing linker protein 3 (clip3).